The chain runs to 243 residues: 3-deoxy-manno-octulosonate cytidylyltransferase (243 aa).

The protein belongs to the KdsB family.

The protein resides in the cytoplasm. It carries out the reaction 3-deoxy-alpha-D-manno-oct-2-ulosonate + CTP = CMP-3-deoxy-beta-D-manno-octulosonate + diphosphate. Its pathway is nucleotide-sugar biosynthesis; CMP-3-deoxy-D-manno-octulosonate biosynthesis; CMP-3-deoxy-D-manno-octulosonate from 3-deoxy-D-manno-octulosonate and CTP: step 1/1. It functions in the pathway bacterial outer membrane biogenesis; lipopolysaccharide biosynthesis. Its function is as follows. Activates KDO (a required 8-carbon sugar) for incorporation into bacterial lipopolysaccharide in Gram-negative bacteria. In Bartonella tribocorum (strain CIP 105476 / IBS 506), this protein is 3-deoxy-manno-octulosonate cytidylyltransferase.